We begin with the raw amino-acid sequence, 2153 residues long: MEKYREIHQRVKEIPPGGASALECLDLLDRLYAVRHDVVDQMIKHDWSDNKDMERPIGQVLLMAGVPNDVIQGMEKKVIPTSPSGQILKSFFRMTPDNYKITGALIEFIEVTVTADVAKGIREKKLKYESGLQFVESLLSQEHKKGNINQAYKITFDVVAVKTDGSNISTQWPSRRNDGVVQHMRLVQADINYVREHLIKPDERASLEAMFNLKFHVGGPKLRYFNIPDYKPQSLCQPEITNLIQYCKHWLTEDHDFVFKEVTGNNVMNSFENNESVYMSRYRESRKPRNFLLIQGSIQGPYLPSTISSDQCDTRIGCLEVLKVHPETPVQAIAVDMAYKYMELNRDEIINYYNPRVHFQATQSVKEPGTFKLGLSQLNPMSKSILDQVGKHKSEKGLFGEPLESINISSQIQQNECSRIIESILSNLEINVGEVTMSLANPRKTTGVDELLGKFYENELSKYLISILRKTAAWHIGHLIRDITESLIAHAGLKRSKYWSIHAYDHGGVILFILPSKSLEVVGSYIRYFTVFKDGIGLIDEENLDSKVDIDGVQWCFSKVMSIDLNRLLALNIAFEKALLATATWFQYYTEDQGHFPLQHALRSVFSFHFLLCVSQKMKICAIFDNLRYLIPAVTSLYSGYELLIEKFFERPFKSALEVYLYNIIKALLISLAQNNKVRFYSKVRLLGLTVDHSTVGASGVYPSLMSRVVYKHYRSLISEATTCFFLFEKGLHGNLNEEAKIHLETVEWARKFEAKERKYGDILMREGYTIDAIRVGDVQVEQQLFCQEVVELSAEELNKYLQAKSQVLSSNIMNKHWDKPYFSQTRNISLKGMSGALQEDGHLAASVTLIEAIRFLNRSQTNPNVIDMYEQTKQHKAQARIVRKYQRTEADRGFFITTLPTRVRLEIIEDYYDAIARVVPEEYISYGGDKKILNIQTALEKALRWASGSSEVITSTGNVIKFKRRLMYVSADATKWSPGDNSAKFKRFTQALYDGLSDEKLKCCVVDALRHVYETEFFMSRKLHRYIDSMDEHSEAVQDFLDFFKGGVSATVKGNWLQGNLNKCSSLFGAAVSLLFRRIWAELFPELECFFEFAHHSDDALFIYGYLEPEDDGTDWFLYVSQQIQAGNYHWHAVNQEMWKSMFNLHEHLLLMGSIKVSPKKTTVSPTNAEFLSTFFEGCAVSIPFIKILLGSLSDLPGLGFFDDLAAAQSRCVKAMDLGASPQLAQLAVVICTSKVERLYGTADGMVNSPVAFLKVTKAHVPIPLGGDGSMSIMELATAGIGMADKNILKQAFYSYKHTRRDGDRYVLGLFKFLMSLSEDVFQHDRLGEFSFVGKVQWKVFTPKNEFEFFDQFSQSYLKSWTNQHPVYDYIIPRGRDNLLVYLVRKLNDPSIVTAMTMQSPLQLRFRMQAKQHMKVCKLEGEWVTFREVLAAADSFATKYNPTEKDLDLFNTLVSCTFSKEYAWKDFLNEVRCEVVPTKHVHRSKIARTFTVREKDQAIQNPITAVIGYKYASTVDEISDVLDSSFFPDSLSADLQVMKEGVYRELGLDIGLPEVLKRIAPLLYKAGRSRVVIVEGNVEGTAESICSYWLRSMSLVKTIKVRPKKEVLRAVSLYSTKENIGLQDDVAATRLCIEVWRWCKANDQNVNDWLNALYFEKQTLMDWVERFRRKGVVPIDPEIQCIALLLYDVLGYKSVLQMQANRRAYSGKQYDAYCVQTYNEETRLYEGDLRVTFNFGLDCARLEIFWDKKEYILETSITQRHVLKLMMEEVTQELLRCGMRFKTEQVSHTRSLVLFKTESGFEWGKPNVPCIVFKHCALRTGLRTKQAINKEFMINVQADGFRAIAQMDMESPRFLLAHAYHTLRDVRYQAVQAVGNVWFQTAQHKLFINPIISSGLLENFMKGLPAAIPPAAYSLIMNKAKISVDLFMFNELLALVNPRNVLNLDGIEETSEGYSTVTSISSRQWSEEVSLMADDDIDDEEEFTIALDDIDFEQINLDEDIQHFLQDESAYTGDLTIQTEEVEVKRIRGVTRVLEPVKLIKSWVSKGLAIDKVYNPIGIVLMARYMSKNYDFSKIPLALLNPYDLTEFESVVKGWGETVNDRFLEVDNDAQRLVREKNILPEDILPDSLFSFRHVDVLLKRLFPHDPVSSFY.

Mn(2+) is bound by residues H36, E54, D97, E110, and V111. K124 functions as the For endonuclease activity in the catalytic mechanism. The RdRp catalytic domain maps to 957–1143 (TGNVIKFKRR…AVNQEMWKSM (187 aa)). Residue D1100 coordinates Mg(2+). The tract at residues 1291 to 2153 (KQAFYSYKHT…FPHDPVSSFY (863 aa)) is interaction with the viral nucleoprotein.

It belongs to the Bunyavirales RNA polymerase family. Interacts with the viral nucleoprotein; this interaction is required for RdRp function. Requires Mn(2+) as cofactor. It depends on Mg(2+) as a cofactor.

It localises to the host cytoplasm. The protein resides in the host perinuclear region. It catalyses the reaction RNA(n) + a ribonucleoside 5'-triphosphate = RNA(n+1) + diphosphate. Functionally, RNA-dependent RNA polymerase, which is responsible for the replication and transcription of the viral RNA genome using antigenomic RNA as an intermediate. During transcription, synthesizes subgenomic RNAs and assures their capping by a cap-snatching mechanism, which involves the endonuclease activity cleaving the host capped pre-mRNAs. These short capped RNAs are then used as primers for viral transcription. Cleaves ssRNA substrates but not DNA. Seems to downregulate the expression of its own and heterologous mRNAs through its endonuclease activity. The polypeptide is RNA-directed RNA polymerase L (Sin Nombre orthohantavirus (SNV)).